The sequence spans 264 residues: 3-methyl-2-oxobutanoate hydroxymethyltransferase (264 aa).

Residues aspartate 45 and aspartate 84 each contribute to the Mg(2+) site. 3-methyl-2-oxobutanoate is bound by residues 45–46 (DS), aspartate 84, and lysine 112. Glutamate 114 provides a ligand contact to Mg(2+). Glutamate 181 (proton acceptor) is an active-site residue.

This sequence belongs to the PanB family. In terms of assembly, homodecamer; pentamer of dimers. Mg(2+) serves as cofactor.

The protein resides in the cytoplasm. It catalyses the reaction 3-methyl-2-oxobutanoate + (6R)-5,10-methylene-5,6,7,8-tetrahydrofolate + H2O = 2-dehydropantoate + (6S)-5,6,7,8-tetrahydrofolate. Its pathway is cofactor biosynthesis; (R)-pantothenate biosynthesis; (R)-pantoate from 3-methyl-2-oxobutanoate: step 1/2. In terms of biological role, catalyzes the reversible reaction in which hydroxymethyl group from 5,10-methylenetetrahydrofolate is transferred onto alpha-ketoisovalerate to form ketopantoate. The polypeptide is 3-methyl-2-oxobutanoate hydroxymethyltransferase (Vibrio atlanticus (strain LGP32) (Vibrio splendidus (strain Mel32))).